A 167-amino-acid polypeptide reads, in one-letter code: Endoribonuclease YbeY (167 aa).

Residues His-131, His-135, and His-141 each coordinate Zn(2+).

It belongs to the endoribonuclease YbeY family. Requires Zn(2+) as cofactor.

The protein localises to the cytoplasm. Its function is as follows. Single strand-specific metallo-endoribonuclease involved in late-stage 70S ribosome quality control and in maturation of the 3' terminus of the 16S rRNA. The sequence is that of Endoribonuclease YbeY from Rickettsia africae (strain ESF-5).